Reading from the N-terminus, the 477-residue chain is Ribulose bisphosphate carboxylase large chain (477 aa).

Residues 1–2 (MS) constitute a propeptide that is removed on maturation. N-acetylproline is present on proline 3. Asparagine 123 and threonine 173 together coordinate substrate. Lysine 175 functions as the Proton acceptor in the catalytic mechanism. Lysine 177 serves as a coordination point for substrate. Mg(2+) is bound by residues lysine 201, aspartate 203, and glutamate 204. Lysine 201 is subject to N6-carboxylysine. The Proton acceptor role is filled by histidine 294. The substrate site is built by arginine 295, histidine 327, and serine 379.

Belongs to the RuBisCO large chain family. Type I subfamily. Heterohexadecamer of 8 large chains and 8 small chains; disulfide-linked. The disulfide link is formed within the large subunit homodimers. Mg(2+) serves as cofactor. Post-translationally, the disulfide bond which can form in the large chain dimeric partners within the hexadecamer appears to be associated with oxidative stress and protein turnover.

It is found in the plastid. The protein localises to the chloroplast. The enzyme catalyses 2 (2R)-3-phosphoglycerate + 2 H(+) = D-ribulose 1,5-bisphosphate + CO2 + H2O. It carries out the reaction D-ribulose 1,5-bisphosphate + O2 = 2-phosphoglycolate + (2R)-3-phosphoglycerate + 2 H(+). Its function is as follows. RuBisCO catalyzes two reactions: the carboxylation of D-ribulose 1,5-bisphosphate, the primary event in carbon dioxide fixation, as well as the oxidative fragmentation of the pentose substrate in the photorespiration process. Both reactions occur simultaneously and in competition at the same active site. This Lolium perenne (Perennial ryegrass) protein is Ribulose bisphosphate carboxylase large chain.